Here is a 380-residue protein sequence, read N- to C-terminus: Alpha-N-acetylneuraminate alpha-2,8-sialyltransferase ST8SIA3 (380 aa).

The Cytoplasmic segment spans residues 1-9; it reads MRNCKMARV. A helical; Signal-anchor for type II membrane protein transmembrane segment spans residues 10–33; it reads ASVLGLVMLSVALLNLSLISYVSL. Residues 34 to 380 are Lumenal-facing; the sequence is KKENIFATPK…LTKLTLSHCA (347 aa). N-linked (GlcNAc...) asparagine glycans are attached at residues Asn93 and Asn113. 2 disulfide bridges follow: Cys162/Cys313 and Cys176/Cys379. The CMP-N-acetyl-beta-neuraminate site is built by Asn167 and Asn190. Residue Asn206 is glycosylated (N-linked (GlcNAc...) asparagine). CMP-N-acetyl-beta-neuraminate-binding residues include Ser300, Thr301, Gly302, Trp322, Tyr336, and His337. The active-site Proton donor/acceptor is His354.

The protein belongs to the glycosyltransferase 29 family. In terms of assembly, homodimer. Post-translationally, autopolysialylated.

It localises to the golgi apparatus membrane. The catalysed reaction is [N-acetyl-alpha-D-neuraminosyl-(2-&gt;8)](n) + CMP-N-acetyl-beta-neuraminate = [N-acetyl-alpha-D-neuraminosyl-(2-&gt;8)](n+1) + CMP + H(+). It carries out the reaction alpha-Neu5Ac-(2-&gt;3)-beta-D-Gal-(1-&gt;4)-6S-D-GlcNAc + CMP-N-acetyl-beta-neuraminate = alpha-Neu5Ac-(2-&gt;8)-alpha-Neu5Ac-(2-&gt;3)-beta-D-Gal-(1-&gt;4)-6S-D-GlcNAc + CMP + H(+). The enzyme catalyses a ganglioside GM3 (d18:1(4E)) + CMP-N-acetyl-beta-neuraminate = a ganglioside GD3 (d18:1(4E)) + CMP + H(+). It catalyses the reaction a ganglioside GM3 + CMP-N-acetyl-beta-neuraminate = a ganglioside GD3 + CMP + H(+). The catalysed reaction is an N-acetyl-alpha-neuraminyl-(2-&gt;3)-beta-D-galactosyl derivative + CMP-N-acetyl-beta-neuraminate = an N-acetyl-alpha-neuraminyl-(2-&gt;8)-N-acetyl-alpha-neuraminyl-(2-&gt;3)-beta-D-galactosyl derivative + CMP + H(+). It carries out the reaction an N-acetyl-alpha-neuraminyl-(2-&gt;3)-beta-D-galactosyl-(1-&gt;4)-N-acetyl-beta-D-glucosaminyl derivative + CMP-N-acetyl-beta-neuraminate = an alpha-Neu5Ac-(2-&gt;8)-alpha-Neu5Ac-(2-&gt;3)-beta-D-Gal-(1-&gt;4)-beta-D-GlcNAc derivative + CMP + H(+). Its pathway is protein modification; protein glycosylation. In terms of biological role, catalyzes the transfer of sialic acid from a CMP-linked sialic acid donor onto a terminal alpha-2,3-, alpha-2,6-, or alpha-2,8-linked sialic acid of an acceptor, such as N-linked oligosaccharides of glycoproteins and glycolipids through alpha-2,8-linkages. Forms oligosialic and polysialic acid on various sialylated N-acetyllactosamine oligosaccharides of glycoproteins, including FETUB N-glycans, a2-HS-glycoprotein (AHSG) and alpha 2,3-sialylated glycosphingolipids, such as alpha 2,3-sialylparagloboside and ganglioside GM3 and to a lesser extent NCAM1 N-glycans. However, it is much more specific to N-linked oligosaccharides of glycoproteins than glycosphingolipids. 2,3-sialylparagloboside serves as the best acceptor substrate among the glycolipids. alpha-Neu5Ac-(2-&gt;8)-alpha-Neu5Ac-(2-&gt;3)-beta-D-Gal-(1-&gt;4)-6S-D-GlcNAc and monosialyl and disialyl N-acetyllactosamines are the best acceptor substrates among glycoproteins. May plays critical role in the striatum by mediating the formation of disialylated and trisialylated terminal glycotopes on N- and O-glycans of specific striatal proteins, regulating their distribution in lipid rafts, affecting their interaction with other binding partners, and subsequently modulating striatal functions. The polypeptide is Alpha-N-acetylneuraminate alpha-2,8-sialyltransferase ST8SIA3 (Pan troglodytes (Chimpanzee)).